Reading from the N-terminus, the 255-residue chain is MGIRIIIAGYRGKMGSTALSMAQNEEDFEVVALLDPNAKEKEFQGIPVYNLKEDLKTIDAEVWVDFTHPEVAFENTHFAIEQGFAPVVGTTGFTSKEIENLIQLSSDKNIGGLIAPNFAIGALLLMEFAERAAKYFPNVEIIELHHDQKKDAPSGTALKTAEVISKERQEITQGHPDEVESLPGARGANYQGMHIHSVRLPGLVAHQEVLFGGPGEGLTLRHDSYDRQSFMQGVKIGIREVVKRNQLVYGLEKLL.

Residues 9 to 14 (GYRGKM), 89 to 91 (GTT), and 115 to 118 (APNF) contribute to the NAD(+) site. His-145 functions as the Proton donor/acceptor in the catalytic mechanism. (S)-2,3,4,5-tetrahydrodipicolinate is bound at residue His-146. The Proton donor role is filled by Lys-149. 155 to 156 (GT) lines the (S)-2,3,4,5-tetrahydrodipicolinate pocket.

The protein belongs to the DapB family.

The protein localises to the cytoplasm. The enzyme catalyses (S)-2,3,4,5-tetrahydrodipicolinate + NAD(+) + H2O = (2S,4S)-4-hydroxy-2,3,4,5-tetrahydrodipicolinate + NADH + H(+). It carries out the reaction (S)-2,3,4,5-tetrahydrodipicolinate + NADP(+) + H2O = (2S,4S)-4-hydroxy-2,3,4,5-tetrahydrodipicolinate + NADPH + H(+). It functions in the pathway amino-acid biosynthesis; L-lysine biosynthesis via DAP pathway; (S)-tetrahydrodipicolinate from L-aspartate: step 4/4. Its function is as follows. Catalyzes the conversion of 4-hydroxy-tetrahydrodipicolinate (HTPA) to tetrahydrodipicolinate. The chain is 4-hydroxy-tetrahydrodipicolinate reductase from Streptococcus uberis (strain ATCC BAA-854 / 0140J).